A 124-amino-acid polypeptide reads, in one-letter code: Apolipoprotein C-IV (124 aa).

An N-terminal signal peptide occupies residues 1–27 (MLLPRRGLRTLPSLCLYILVLVWVVAC).

Belongs to the apolipoprotein C4 family. Glycosylated; contains sialic acid. Present in up to five sialylated isoforms. As to expression, blood plasma, associated primarily with VLDL and HDL. Expressed mainly in the liver.

The protein resides in the secreted. May participate in lipoprotein metabolism. The sequence is that of Apolipoprotein C-IV (APOC4) from Oryctolagus cuniculus (Rabbit).